Consider the following 181-residue polypeptide: 6,7-dimethyl-8-ribityllumazine synthase (181 aa).

5-amino-6-(D-ribitylamino)uracil-binding positions include F24, 62–64, and 86–88; these read SFE and AII. (2S)-2-hydroxy-3-oxobutyl phosphate is bound at residue 91–92; that stretch reads QT. H94 acts as the Proton donor in catalysis. F119 contributes to the 5-amino-6-(D-ribitylamino)uracil binding site. R133 contributes to the (2S)-2-hydroxy-3-oxobutyl phosphate binding site.

Belongs to the DMRL synthase family.

The catalysed reaction is (2S)-2-hydroxy-3-oxobutyl phosphate + 5-amino-6-(D-ribitylamino)uracil = 6,7-dimethyl-8-(1-D-ribityl)lumazine + phosphate + 2 H2O + H(+). Its pathway is cofactor biosynthesis; riboflavin biosynthesis; riboflavin from 2-hydroxy-3-oxobutyl phosphate and 5-amino-6-(D-ribitylamino)uracil: step 1/2. Catalyzes the formation of 6,7-dimethyl-8-ribityllumazine by condensation of 5-amino-6-(D-ribitylamino)uracil with 3,4-dihydroxy-2-butanone 4-phosphate. This is the penultimate step in the biosynthesis of riboflavin. The sequence is that of 6,7-dimethyl-8-ribityllumazine synthase from Microcystis aeruginosa (strain NIES-843 / IAM M-2473).